A 64-amino-acid chain; its full sequence is UPF0434 protein Bcep18194_A5877 (64 aa).

It belongs to the UPF0434 family.

The chain is UPF0434 protein Bcep18194_A5877 from Burkholderia lata (strain ATCC 17760 / DSM 23089 / LMG 22485 / NCIMB 9086 / R18194 / 383).